The chain runs to 537 residues: uncharacterized protein (537 aa).

This is an uncharacterized protein from Mycobacterium bovis (strain ATCC BAA-935 / AF2122/97).